The sequence spans 48 residues: Cytochrome b559 subunit beta (48 aa).

Residues 23 to 39 (WLAVHALAIPSVFFLGA) form a helical membrane-spanning segment. His-27 provides a ligand contact to heme.

The protein belongs to the PsbE/PsbF family. In terms of assembly, heterodimer of an alpha subunit and a beta subunit. PSII is composed of 1 copy each of membrane proteins PsbA, PsbB, PsbC, PsbD, PsbE, PsbF, PsbH, PsbI, PsbJ, PsbK, PsbL, PsbM, PsbT, PsbX, PsbY, Psb30/Ycf12, peripheral proteins PsbO, CyanoQ (PsbQ), PsbU, PsbV and a large number of cofactors. It forms dimeric complexes. The cofactor is heme b.

Its subcellular location is the cellular thylakoid membrane. In terms of biological role, this b-type cytochrome is tightly associated with the reaction center of photosystem II (PSII). PSII is a light-driven water:plastoquinone oxidoreductase that uses light energy to abstract electrons from H(2)O, generating O(2) and a proton gradient subsequently used for ATP formation. It consists of a core antenna complex that captures photons, and an electron transfer chain that converts photonic excitation into a charge separation. The sequence is that of Cytochrome b559 subunit beta from Prochlorococcus marinus (strain MIT 9515).